The primary structure comprises 386 residues: tRNA N6-adenosine threonylcarbamoyltransferase (386 aa).

Histidine 112 and histidine 116 together coordinate Fe cation. Substrate contacts are provided by residues 134–138 (LASGG), aspartate 167, glycine 180, and asparagine 322. Residue aspartate 350 participates in Fe cation binding.

It belongs to the KAE1 / TsaD family. The cofactor is Fe(2+).

The protein localises to the cytoplasm. It carries out the reaction L-threonylcarbamoyladenylate + adenosine(37) in tRNA = N(6)-L-threonylcarbamoyladenosine(37) in tRNA + AMP + H(+). In terms of biological role, required for the formation of a threonylcarbamoyl group on adenosine at position 37 (t(6)A37) in tRNAs that read codons beginning with adenine. Is involved in the transfer of the threonylcarbamoyl moiety of threonylcarbamoyl-AMP (TC-AMP) to the N6 group of A37, together with TsaE and TsaB. TsaD likely plays a direct catalytic role in this reaction. The chain is tRNA N6-adenosine threonylcarbamoyltransferase from Rickettsia akari (strain Hartford).